The chain runs to 627 residues: uncharacterized protein (627 aa).

This is an uncharacterized protein from Caenorhabditis elegans.